Consider the following 393-residue polypeptide: Formate-dependent phosphoribosylglycinamide formyltransferase (393 aa).

Residues 22–23 (EL) and glutamate 82 each bind N(1)-(5-phospho-beta-D-ribosyl)glycinamide. ATP is bound by residues arginine 114, lysine 155, 160–165 (SSGKGQ), 195–198 (EGLV), and glutamate 203. The ATP-grasp domain occupies 119–308 (RLAAETLQLP…EFALHVRAFL (190 aa)). Mg(2+)-binding residues include glutamate 267 and glutamate 279. N(1)-(5-phospho-beta-D-ribosyl)glycinamide contacts are provided by residues aspartate 286, lysine 355, and 362 to 363 (RR).

The protein belongs to the PurK/PurT family. Homodimer.

It carries out the reaction N(1)-(5-phospho-beta-D-ribosyl)glycinamide + formate + ATP = N(2)-formyl-N(1)-(5-phospho-beta-D-ribosyl)glycinamide + ADP + phosphate + H(+). It functions in the pathway purine metabolism; IMP biosynthesis via de novo pathway; N(2)-formyl-N(1)-(5-phospho-D-ribosyl)glycinamide from N(1)-(5-phospho-D-ribosyl)glycinamide (formate route): step 1/1. Functionally, involved in the de novo purine biosynthesis. Catalyzes the transfer of formate to 5-phospho-ribosyl-glycinamide (GAR), producing 5-phospho-ribosyl-N-formylglycinamide (FGAR). Formate is provided by PurU via hydrolysis of 10-formyl-tetrahydrofolate. The chain is Formate-dependent phosphoribosylglycinamide formyltransferase from Yersinia pseudotuberculosis serotype O:3 (strain YPIII).